The sequence spans 355 residues: Peptide chain release factor 1 (355 aa).

Glutamine 234 carries the N5-methylglutamine modification.

This sequence belongs to the prokaryotic/mitochondrial release factor family. Methylated by PrmC. Methylation increases the termination efficiency of RF1.

It localises to the cytoplasm. In terms of biological role, peptide chain release factor 1 directs the termination of translation in response to the peptide chain termination codons UAG and UAA. This Metamycoplasma arthritidis (strain 158L3-1) (Mycoplasma arthritidis) protein is Peptide chain release factor 1.